A 629-amino-acid polypeptide reads, in one-letter code: Ionotropic receptor 75a (629 aa).

The Extracellular segment spans residues 1 to 335 (MQLVQLANFV…GDVFLQPFSP (335 aa)). Asn61, Asn112, Asn126, Asn144, Asn166, and Asn232 each carry an N-linked (GlcNAc...) asparagine glycan. A helical transmembrane segment spans residues 336–356 (LVWYLFGGVLSLIGVLLWITF). Residues 357–374 (YMECKRMQKRWRLDYLPS) lie on the Cytoplasmic side of the membrane. The chain crosses the membrane as a helical span at residues 375–395 (LLSTFLISFGAACIQSSSLIP). Over 396–402 (RSAGGRL) the chain is Extracellular. Residues 403–423 (IYFALFLISFIMYNYYTSVVV) form a helical membrane-spanning segment. Topologically, residues 424 to 592 (SSLLSSPVKS…NFVITVGMEY (169 aa)) are cytoplasmic. Residues 593 to 613 (VAPLLLMLICADILVVVILLV) traverse the membrane as a helical segment. Residues 614–629 (ELAWKRFFTRPLTIHP) lie on the Extracellular side of the membrane.

This sequence belongs to the glutamate-gated ion channel (TC 1.A.10.1) family. In terms of tissue distribution, expressed in neurons in the antennal coeloconic 2 (ac2) sensillum class of sensory hairs (at protein level).

Its subcellular location is the cell membrane. The protein localises to the cell projection. The protein resides in the dendrite. Functionally, olfactory receptor for propionic, butyric and 2-oxopentanoic acids. This Drosophila sechellia (Fruit fly) protein is Ionotropic receptor 75a.